The primary structure comprises 184 residues: uncharacterized protein (184 aa).

In terms of domain architecture, Nudix hydrolase spans 36 to 164 (LRHRATYIVV…TPDSLKALAL (129 aa)). A Nudix box motif is present at residues 73 to 95 (GGVVQADEQLLESARREAEEELG). Residues glutamate 89 and glutamate 93 each coordinate Mg(2+).

The protein belongs to the Nudix hydrolase family. The cofactor is Mg(2+).

This is an uncharacterized protein from Salmonella typhi.